A 221-amino-acid chain; its full sequence is Translation initiation factor 6 (221 aa).

The protein belongs to the eIF-6 family.

Functionally, binds to the 50S ribosomal subunit and prevents its association with the 30S ribosomal subunit to form the 70S initiation complex. This is Translation initiation factor 6 from Methanospirillum hungatei JF-1 (strain ATCC 27890 / DSM 864 / NBRC 100397 / JF-1).